The chain runs to 952 residues: Isoleucine--tRNA ligase (952 aa).

A 'HIGH' region motif is present at residues 58 to 68 (PYANGDIHIGH). Glu576 contacts L-isoleucyl-5'-AMP. A 'KMSKS' region motif is present at residues 617–621 (KMSKS). Position 620 (Lys620) interacts with ATP. 4 residues coordinate Zn(2+): Cys915, Cys918, Cys935, and Cys938.

Belongs to the class-I aminoacyl-tRNA synthetase family. IleS type 1 subfamily. As to quaternary structure, monomer. The cofactor is Zn(2+).

The protein resides in the cytoplasm. It catalyses the reaction tRNA(Ile) + L-isoleucine + ATP = L-isoleucyl-tRNA(Ile) + AMP + diphosphate. Functionally, catalyzes the attachment of isoleucine to tRNA(Ile). As IleRS can inadvertently accommodate and process structurally similar amino acids such as valine, to avoid such errors it has two additional distinct tRNA(Ile)-dependent editing activities. One activity is designated as 'pretransfer' editing and involves the hydrolysis of activated Val-AMP. The other activity is designated 'posttransfer' editing and involves deacylation of mischarged Val-tRNA(Ile). This chain is Isoleucine--tRNA ligase, found in Aliivibrio fischeri (strain ATCC 700601 / ES114) (Vibrio fischeri).